The chain runs to 1000 residues: MVHNAYDSFQLLKDCPARIDAVESYGSKLFAGCYDGSLRIYSPPESSASDPSELHQETYVLEKTVAGFSKKPIVAMEVLASRELLLSLSESIAFHGLPNLETVAVITKAKGANAYSWDDRRGFLCFSRQKRVCVFKHDGGGGFVEVRDYGVPDTVKSISWCGENICLGIKKEYVILNTANGTLSEVFPSGRVAPPLVISLPSGELILGKENIGVFVDQNGKLLQTERICWSEAPTSIVIQNPYAIALLPRRVEVRLLRSPYPLIQTIVLQNIRRLVKSNNAVIVGLDNSVYVLFPVSIGAQIVQLTASGNFEEALALCKVLPPDESSLRAAKESSIHTRFAHYLFENGSYEEAMEHFLASQVDITHVLSMYPSIILPKTTIIPQPDKMVDISGDEASLSRGSSGISDDMESSSPRYFLESEDNADLESKKMSHNTLMALIKYLLKRRPAVIEKATSEGTEEVISDAVGKTYGANDSSKSKKSSKGRGMIPLNSGAREMAAILDTALLQALLHTGQSGAAIELLKGVNYSDVKICEEILMKSKNYSALLELFKSNSMHHEALKLLNQLADESKTNQSQTDVTQIFSPELIIEYLKPLCRTDPMLVLEYSMLVLESCPTQTIDLFLSGNISADLVNSYLKQHAPNMQGRYLELMMAMNDTAVSGNLQNEMVQIYLSEVLDLYAAKSAQQKWDEKDHPPERKKLLSALESISGYSPQPLLKRLPRDALYEERAVILGKMNQHELALSIYVHKLHAPDLALAYCDRIYESVTYLPSGKPSSNIYLTVLQIYLNPKKSAKDFAKRIVALGSFESSDTTKMMDSVLSSKAKGGRSKKIVAIEGAEDMRVGLSSSTDSGRSDVDTEEPLEEGDSTVMISEVLDLLSQRWERINGAQALKLLPRETKLHNLLPFLAPLLRNSSEAHRNFSVIKSLRQSENLQVKEELYKHRKGVAQVTSESMCSLCNKKIGTSVFAVYPNGKTLVHFVCFRDSQGMKAVSKTTHGRRR.

The CNH domain occupies 16 to 282 (PARIDAVESY…RRLVKSNNAV (267 aa)). The interval 394–413 (DEASLSRGSSGISDDMESSS) is disordered. Residues 607–796 (YSMLVLESCP…YLNPKKSAKD (190 aa)) form a CHCR repeat. The interval 844-864 (GLSSSTDSGRSDVDTEEPLEE) is disordered.

Belongs to the VAM6/VPS39 family. In terms of assembly, homooligomer. Component of the homotypic fusion and vacuole protein sorting (HOPS) complex composed of the class C Vps core proteins VPS11, VCL1, VPS18 and VPS33, which in HOPS further associates with VPS39 and VPS41. Interacts directly with VPS11. Binds to RABG3B.

Its subcellular location is the cytoplasm. The protein localises to the vacuole membrane. In terms of biological role, essential protein required during embryogenesis. Believed to act in part as a component of the putative HOPS endosomal tethering complex. HOPS is required for the central vacuole formation. May play a role in clustering and fusion of late endosomes and lysosomes. Plays a role in vesicle-mediated protein trafficking to lysosomal compartments including the endocytic membrane transport and autophagic pathways. Required for fusion of endosomes and autophagosomes with lysosomes. The chain is Vacuolar sorting protein 39 from Arabidopsis thaliana (Mouse-ear cress).